A 1379-amino-acid polypeptide reads, in one-letter code: Attractin-like protein 1 (1379 aa).

A disordered region spans residues 1 to 23; it reads METGGRARTGTPQPAAPGVWRAR. A signal peptide spans 1–52; the sequence is METGGRARTGTPQPAAPGVWRARPAGGGGGGASSWLLDGNSWLLCYGFLYLA. In terms of domain architecture, EGF-like 1 spans 53–91; it reads LYAQVSQSKPCERTGSCFSGRCVNSTCLCDPGWVGDQCQ. Residues 53–1230 lie on the Extracellular side of the membrane; that stretch reads LYAQVSQSKP…FSQHNTIMDL (1178 aa). 3 cysteine pairs are disulfide-bonded: Cys-63-Cys-79, Cys-81-Cys-90, and Cys-93-Cys-119. The N-linked (GlcNAc...) asparagine glycan is linked to Asn-76. In terms of domain architecture, CUB spans 93 to 209; the sequence is CQGRFKLTEP…TGFNIFYSIN (117 aa). Residues Asn-174 and Asn-198 are each glycosylated (N-linked (GlcNAc...) asparagine). An EGF-like 2 domain is found at 207–245; it reads SINSCPNNCSGHGKCTTSVSVPSQVYCECDKYWKGEACD. 3 disulfides stabilise this stretch: Cys-211–Cys-221, Cys-215–Cys-233, and Cys-235–Cys-244. Kelch repeat units lie at residues 316 to 365, 367 to 415, 427 to 475, 480 to 531, 533 to 591, and 592 to 638; these read FMWV…LYQE, IFMY…EGHS, VMII…SVYD, SIYV…LING, MLIF…VING, and SMYI…WNKN. Asn-380 carries N-linked (GlcNAc...) asparagine glycosylation. 3 PSI domains span residues 614-657, 666-709, and 715-760; these read NCKA…AKCP, RCYR…TKCH, and ICNK…DACL. The region spanning 755–873 is the C-type lectin domain; sequence IGDACLRVNS…TSMANGLVCE (119 aa). Residues Asn-763, Asn-778, and Asn-898 are each glycosylated (N-linked (GlcNAc...) asparagine). Residues Cys-776 and Cys-872 are joined by a disulfide bond. PSI domains follow at residues 889 to 939 and 942 to 1012; these read PCSL…ATCS and NCSG…IQCP. 8 disulfide bridges follow: Cys-1014–Cys-1022, Cys-1016–Cys-1028, Cys-1031–Cys-1040, Cys-1043–Cys-1057, Cys-1060–Cys-1069, Cys-1062–Cys-1076, Cys-1078–Cys-1088, and Cys-1091–Cys-1106. Laminin EGF-like domains lie at 1014 to 1059 and 1060 to 1108; these read CQCN…QCTA and CTCS…TCYY. A glycan (N-linked (GlcNAc...) asparagine) is linked at Asn-1157. A helical transmembrane segment spans residues 1231 to 1251; that stretch reads VQFFVTFFSCFLSLLLVAAVV. Residues 1252–1379 lie on the Cytoplasmic side of the membrane; the sequence is WKIKQTCWAS…HLSTRQGTCV (128 aa). The interval 1354–1379 is disordered; that stretch reads KASDSKDKTSGVRNRKHLSTRQGTCV.

In terms of assembly, interacts with MC4R.

The protein resides in the membrane. In terms of biological role, may play a role in melanocortin signaling pathways that regulate energy homeostasis. The protein is Attractin-like protein 1 (ATRNL1) of Homo sapiens (Human).